Here is a 728-residue protein sequence, read N- to C-terminus: Catalase-peroxidase 1 (728 aa).

Positions 91 to 218 (WHSAGTYRTA…LAAVQMGLIY (128 aa)) form a cross-link, tryptophyl-tyrosyl-methioninium (Trp-Tyr) (with M-244). Catalysis depends on H92, which acts as the Proton acceptor. Residues 218 to 244 (YVNPEGPDGNPDPVAAAHDIRETFARM) constitute a cross-link (tryptophyl-tyrosyl-methioninium (Tyr-Met) (with W-91)). Position 259 (H259) interacts with heme b.

The protein belongs to the peroxidase family. Peroxidase/catalase subfamily. Homodimer or homotetramer. It depends on heme b as a cofactor. In terms of processing, formation of the three residue Trp-Tyr-Met cross-link is important for the catalase, but not the peroxidase activity of the enzyme.

The enzyme catalyses H2O2 + AH2 = A + 2 H2O. It carries out the reaction 2 H2O2 = O2 + 2 H2O. In terms of biological role, bifunctional enzyme with both catalase and broad-spectrum peroxidase activity. This chain is Catalase-peroxidase 1, found in Burkholderia cenocepacia (strain ATCC BAA-245 / DSM 16553 / LMG 16656 / NCTC 13227 / J2315 / CF5610) (Burkholderia cepacia (strain J2315)).